An 81-amino-acid chain; its full sequence is uncharacterized protein (81 aa).

This is an uncharacterized protein from Schizosaccharomyces pombe (strain 972 / ATCC 24843) (Fission yeast).